The primary structure comprises 123 residues: Ribosome-binding factor A (123 aa).

Belongs to the RbfA family. As to quaternary structure, monomer. Binds 30S ribosomal subunits, but not 50S ribosomal subunits or 70S ribosomes.

The protein localises to the cytoplasm. In terms of biological role, one of several proteins that assist in the late maturation steps of the functional core of the 30S ribosomal subunit. Associates with free 30S ribosomal subunits (but not with 30S subunits that are part of 70S ribosomes or polysomes). Required for efficient processing of 16S rRNA. May interact with the 5'-terminal helix region of 16S rRNA. The chain is Ribosome-binding factor A from Lactobacillus johnsonii (strain CNCM I-12250 / La1 / NCC 533).